The following is a 153-amino-acid chain: Melatonin receptor type 1A X2.0 (153 aa).

At 1–12 the chain is on the cytoplasmic side; it reads HSSWYNRLFSNS. A helical membrane pass occupies residues 13–33; that stretch reads GTICYVGLVWVLALGAILPNL. Topologically, residues 34 to 57 are extracellular; the sequence is FVGSLRCDPRIFSCTFAQYVSSYY. Residues 58–78 traverse the membrane as a helical segment; it reads TIAVVIFHFFLPIGVVSYCYL. The Cytoplasmic portion of the chain corresponds to 79–112; sequence RIWVLVLNIRHRVKPDRHLHHQTWPYNIHGFITM. Residues 113–133 form a helical membrane-spanning segment; it reads FVVFVLFAVCWGPLNIIGLTV. The Extracellular portion of the chain corresponds to 134 to 145; the sequence is AIYPPLGDSIPQ. Residues 146–153 traverse the membrane as a helical segment; the sequence is WLFVASYF.

Belongs to the G-protein coupled receptor 1 family.

It is found in the cell membrane. Its function is as follows. High affinity receptor for melatonin. The activity of this receptor is mediated by pertussis toxin sensitive G proteins that inhibits adenylate cyclase activity. This is Melatonin receptor type 1A X2.0 from Xenopus laevis (African clawed frog).